We begin with the raw amino-acid sequence, 1524 residues long: DNA-directed RNA polymerase subunit beta' (1524 aa).

Zn(2+) contacts are provided by C58, C60, C73, and C76. 3 residues coordinate Mg(2+): D739, D741, and D743. Residues C1112, C1194, C1201, and C1204 each contribute to the Zn(2+) site. The tract at residues 1502-1524 (AVEAKEKEAPRRPVRREQPGKGL) is disordered.

The protein belongs to the RNA polymerase beta' chain family. The RNAP catalytic core consists of 2 alpha, 1 beta, 1 beta' and 1 omega subunit. When a sigma factor is associated with the core the holoenzyme is formed, which can initiate transcription. Mg(2+) serves as cofactor. Zn(2+) is required as a cofactor.

The enzyme catalyses RNA(n) + a ribonucleoside 5'-triphosphate = RNA(n+1) + diphosphate. Functionally, DNA-dependent RNA polymerase catalyzes the transcription of DNA into RNA using the four ribonucleoside triphosphates as substrates. This is DNA-directed RNA polymerase subunit beta' from Thermus aquaticus.